The following is a 221-amino-acid chain: Octanoyltransferase (221 aa).

Positions 40 to 218 (PNLEDVLILL…AFAEVFGLEL (179 aa)) constitute a BPL/LPL catalytic domain. Substrate-binding positions include 82–89 (RGGEVTYH), 149–151 (AIG), and 162–164 (GFA). Cys180 acts as the Acyl-thioester intermediate in catalysis.

Belongs to the LipB family.

Its subcellular location is the cytoplasm. The catalysed reaction is octanoyl-[ACP] + L-lysyl-[protein] = N(6)-octanoyl-L-lysyl-[protein] + holo-[ACP] + H(+). It participates in protein modification; protein lipoylation via endogenous pathway; protein N(6)-(lipoyl)lysine from octanoyl-[acyl-carrier-protein]: step 1/2. In terms of biological role, catalyzes the transfer of endogenously produced octanoic acid from octanoyl-acyl-carrier-protein onto the lipoyl domains of lipoate-dependent enzymes. Lipoyl-ACP can also act as a substrate although octanoyl-ACP is likely to be the physiological substrate. In Nostoc sp. (strain PCC 7120 / SAG 25.82 / UTEX 2576), this protein is Octanoyltransferase.